A 467-amino-acid polypeptide reads, in one-letter code: Asparagine--tRNA ligase (467 aa).

This sequence belongs to the class-II aminoacyl-tRNA synthetase family. In terms of assembly, homodimer.

It localises to the cytoplasm. It catalyses the reaction tRNA(Asn) + L-asparagine + ATP = L-asparaginyl-tRNA(Asn) + AMP + diphosphate + H(+). This is Asparagine--tRNA ligase from Actinobacillus pleuropneumoniae serotype 3 (strain JL03).